Here is a 130-residue protein sequence, read N- to C-terminus: Small ribosomal subunit protein uS17m (130 aa).

It belongs to the universal ribosomal protein uS17 family. In terms of assembly, component of the mitochondrial ribosome small subunit (28S) which comprises a 12S rRNA and about 30 distinct proteins.

The protein resides in the mitochondrion. The protein is Small ribosomal subunit protein uS17m (MRPS17) of Bos taurus (Bovine).